Consider the following 436-residue polypeptide: Glutamyl-tRNA(Gln) amidotransferase subunit D (436 aa).

In terms of domain architecture, Asparaginase/glutaminase spans 91–420 (QNISIISTGG…GEVAKLMNKN (330 aa)). Active-site residues include threonine 101, threonine 177, aspartate 178, and lysine 254.

Belongs to the asparaginase 1 family. GatD subfamily. In terms of assembly, heterodimer of GatD and GatE.

It carries out the reaction L-glutamyl-tRNA(Gln) + L-glutamine + ATP + H2O = L-glutaminyl-tRNA(Gln) + L-glutamate + ADP + phosphate + H(+). Allows the formation of correctly charged Gln-tRNA(Gln) through the transamidation of misacylated Glu-tRNA(Gln) in organisms which lack glutaminyl-tRNA synthetase. The reaction takes place in the presence of glutamine and ATP through an activated gamma-phospho-Glu-tRNA(Gln). The GatDE system is specific for glutamate and does not act on aspartate. The polypeptide is Glutamyl-tRNA(Gln) amidotransferase subunit D (Methanobrevibacter smithii (strain ATCC 35061 / DSM 861 / OCM 144 / PS)).